We begin with the raw amino-acid sequence, 307 residues long: Actin maturation protease (307 aa).

Residues 1–34 are disordered; the sequence is MSLENDAAAPPPPPLPPPPPPQPPSLARSESSKK. Pro residues predominate over residues 9–24; it reads APPPPPLPPPPPPQPP. The tract at residues 80–200 is peptidase C39-like; that stretch reads SLIQDGPQCG…WAVASGILLG (121 aa). The active site involves Cys88.

It belongs to the ACTMAP family.

The protein localises to the cytoplasm. The catalysed reaction is N-terminal N(alpha)-acetyl-L-methionyl-L-aspartyl-[protein] + H2O = N-terminal L-aspartyl-[protein] + N-acetyl-L-methionine. It catalyses the reaction N-terminal N(alpha)-acetyl-L-methionyl-L-glutamyl-[protein] + H2O = N-terminal L-glutamyl-[protein] + N-acetyl-L-methionine. It carries out the reaction N-terminal N(alpha)-acetyl-L-cysteinyl-L-aspartyl-[protein] + H2O = N-terminal L-aspartyl-[protein] + N-acetyl-L-cysteine. The enzyme catalyses N-terminal N(alpha)-acetyl-L-cysteinyl-L-glutamyl-[protein] + H2O = N-terminal L-glutamyl-[protein] + N-acetyl-L-cysteine. Functionally, actin maturation protease that specifically mediates the cleavage of immature acetylated N-terminal actin, thereby contributing to actin maturation. Cleaves N-terminal acetylated methionine of immature cytoplasmic actin after translation. Cleaves N-terminal acetylated cysteine of muscle actin after canonical removal of N-terminal methionine. This is Actin maturation protease from Danio rerio (Zebrafish).